Here is a 219-residue protein sequence, read N- to C-terminus: MKKEKAVVVFSGGQDSTTCLLWALQNFEEVETVTFHYNQRHQEEIDVAKSIAEKLGVKNHLLDMSLLNQLAPNALTRDDIEIEAKDGELPTTFVPGRNLVFLSFASILAYQIGARHIITGVCETDFSGYPDCRDEFVKSCNVTVNLAMEKPFVIHTPLMWLNKAETWKLADELGALDFVKNNTLTCYNGIIADGCGECPACLLRNKGYDEYMKMKGERN.

10–20 (FSGGQDSTTCL) is a binding site for ATP. 4 residues coordinate Zn(2+): Cys186, Cys195, Cys198, and Cys201.

Belongs to the QueC family. In terms of assembly, homodimer. It depends on Zn(2+) as a cofactor.

It catalyses the reaction 7-carboxy-7-deazaguanine + NH4(+) + ATP = 7-cyano-7-deazaguanine + ADP + phosphate + H2O + H(+). The protein operates within purine metabolism; 7-cyano-7-deazaguanine biosynthesis. Catalyzes the ATP-dependent conversion of 7-carboxy-7-deazaguanine (CDG) to 7-cyano-7-deazaguanine (preQ(0)). In Bacillus velezensis (strain DSM 23117 / BGSC 10A6 / LMG 26770 / FZB42) (Bacillus amyloliquefaciens subsp. plantarum), this protein is 7-cyano-7-deazaguanine synthase.